The primary structure comprises 243 residues: 7-cyano-7-deazaguanine synthase (243 aa).

ATP is bound at residue 14-24 (FSGGQDSATCL). Positions 202, 217, 220, and 223 each coordinate Zn(2+).

This sequence belongs to the QueC family. Zn(2+) serves as cofactor.

It catalyses the reaction 7-carboxy-7-deazaguanine + NH4(+) + ATP = 7-cyano-7-deazaguanine + ADP + phosphate + H2O + H(+). It participates in purine metabolism; 7-cyano-7-deazaguanine biosynthesis. Functionally, catalyzes the ATP-dependent conversion of 7-carboxy-7-deazaguanine (CDG) to 7-cyano-7-deazaguanine (preQ(0)). The chain is 7-cyano-7-deazaguanine synthase from Paraburkholderia phymatum (strain DSM 17167 / CIP 108236 / LMG 21445 / STM815) (Burkholderia phymatum).